The chain runs to 1592 residues: Serine/threonine-protein kinase mrck-1 (1592 aa).

Positions 1–954 (MAEPPPDDSA…IFSPVSISAM (954 aa)) are involved in homo-dimerization. The Protein kinase domain occupies 83–351 (FEVLKVIGKG…LSDFQLHPFF (269 aa)). Residues 89-97 (IGKGAFGEV) and Lys-112 each bind ATP. The active-site Proton acceptor is Asp-207. Residues 352 to 426 (EGIDWNTIRD…THGSLLSDAR (75 aa)) enclose the AGC-kinase C-terminal domain. Position 415 is a phosphoserine (Ser-415). Tyr-416 bears the Phosphotyrosine mark. 2 coiled-coil regions span residues 444 to 782 (ELME…KNNS) and 811 to 871 (LDLQ…IENS). Residues 782 to 796 (SPLTTSNYIQNTPSG) show a composition bias toward polar residues. Residues 782–801 (SPLTTSNYIQNTPSGWGSRR) form a disordered region. An involved in binding to membranes, with a preference for di-phosphorylated phosphoinositides (PIPs) region spans residues 955–1534 (ERGHNFERMK…FRTIGKDDRS (580 aa)). The Phorbol-ester/DAG-type zinc finger occupies 957 to 1007 (GHNFERMKIKTPTKCGHCTSILIGLDRQGLFCQSCQYACHVSCAERVSQSC). Residues His-958, Cys-971, Cys-974, Cys-988, Cys-991, His-996, Cys-999, and Cys-1007 each coordinate Zn(2+). One can recognise a PH domain in the interval 1026-1154 (GTAYEGLVKT…WVVALSELKT (129 aa)). Residues 1181–1479 (IRVAQCCAII…KPLSGDGILS (299 aa)) enclose the CNH domain. One can recognise a CRIB domain in the interval 1544 to 1557 (ISTPSDFMHIVHMG). The tract at residues 1544–1557 (ISTPSDFMHIVHMG) is involved in interaction with cdc-42 (GTP-bound). Deletion prevents rescue of a null mutant; furthermore deleted form of mrck-1 is no longer recruited to the cell cortex and instead appears to be completely cytoplasmic.

The protein belongs to the protein kinase superfamily. AGC Ser/Thr protein kinase family. DMPK subfamily. Homodimer, via N-terminal domains. Interacts (via the CRIB domain) with cdc-42 (GTP-bound), but with a lower affinity for cdc-42 bound to GDP; the interaction is direct and may play a role in the recruitment of mrck-1 to the apical membrane. Requires Mg(2+) as cofactor. As to expression, expressed in embryonic and L4 larval seam cells and in embryonic dorsal and ventral epidermal cells. Also expressed in the pharynx throughout development and in sublateral nerve cords in the L4 larva.

The protein localises to the cytoplasm. The protein resides in the cell cortex. The enzyme catalyses L-seryl-[protein] + ATP = O-phospho-L-seryl-[protein] + ADP + H(+). It carries out the reaction L-threonyl-[protein] + ATP = O-phospho-L-threonyl-[protein] + ADP + H(+). Its function is as follows. Serine/threonine-protein kinase. Involved in regulating endoderm precursor cell movements during early gastrulation; activates apical myosin and thereby increases actomyosin contractility and tension in the apical cell cortex, probably as a result of recruitment of mrck-1 to the cortex by a combination of interaction with active cdc-42 and membrane binding. May phosphorylate and inactivate the phosphatase mel-11, and thereby contribute to the regulation of myosin II contractility during embryonic elongation. Involved in controlling canal length and Golgi/ER integrity during excretory canal elongation. This is Serine/threonine-protein kinase mrck-1 from Caenorhabditis elegans.